The primary structure comprises 248 residues: 21S rRNA pseudouridine(2819) synthase (248 aa).

Aspartate 58 is an active-site residue.

It belongs to the pseudouridine synthase RluA family.

The protein localises to the mitochondrion. The catalysed reaction is uridine(2819) in 21S rRNA = pseudouridine(2819) in 21S rRNA. In terms of biological role, pseudouridylate synthase responsible for the pseudouridine-2819 formation in mitochondrial 21S rRNA. May modulate the efficiency or the fidelity of the mitochondrial translation machinery. This is 21S rRNA pseudouridine(2819) synthase (PUS5) from Candida albicans (strain SC5314 / ATCC MYA-2876) (Yeast).